The primary structure comprises 182 residues: UPF0301 protein NGK_1355 (182 aa).

The protein belongs to the UPF0301 (AlgH) family.

This is UPF0301 protein NGK_1355 from Neisseria gonorrhoeae (strain NCCP11945).